Consider the following 205-residue polypeptide: MSNEYDYLFKLLLIGDSSVGKSCLLLRFADDAYIDSYISTIGVDFKIRTIEQDGKTIKLQIWDTAGQERFRTITSSYYRGAHGIIIVYDCTEMESFNNVKQWLSEIDRYANESVCKLLIGNKNDMVESKVVSTETGRALADELGIPFLETSAKDSINVEQAFLTIAGEIKKKMGSQTNANKTSGPGTVQMKGQPIQQNNGGCCGQ.

At Ser2 the chain carries N-acetylserine. GTP contacts are provided by residues 15-23 (GDSSVGKSC), 33-40 (YIDSYIST), 63-67 (DTAGQ), 121-124 (NKND), and 151-153 (SAK). Residues 37–45 (YISTIGVDF) carry the Effector region motif. Composition is skewed to polar residues over residues 174 to 186 (GSQT…SGPG) and 194 to 205 (PIQQNNGGCCGQ). A disordered region spans residues 174-205 (GSQTNANKTSGPGTVQMKGQPIQQNNGGCCGQ). Residues Cys202 and Cys203 are each lipidated (S-geranylgeranyl cysteine).

It belongs to the small GTPase superfamily. Rab family. In terms of assembly, does not interact with GC5. Interacts with XI-2/MYA2.

Its subcellular location is the golgi apparatus. The protein resides in the trans-Golgi network membrane. It is found in the golgi apparatus membrane. Protein transport. Regulator of membrane traffic from the Golgi apparatus towards the endoplasmic reticulum (ER). The protein is Ras-related protein RABD1 (RABD1) of Arabidopsis thaliana (Mouse-ear cress).